The primary structure comprises 160 residues: FMRFamide-like neuropeptides 13 (160 aa).

An N-terminal signal peptide occupies residues 1 to 17; the sequence is MMTSLLTISMFVVAIQA. The propeptide occupies 18–43; the sequence is FDSSEIRMLDEQYDTKNPFFQFLENS. Residues Phe60, Phe73, Phe85, Phe98, Phe110, Phe123, Phe135, Phe146, and Phe157 each carry the phenylalanine amide modification.

Belongs to the FARP (FMRFamide related peptide) family. As to expression, expressed in the ASE sensory neurons, the DD motor neurons, the 15, M3 and M5 cholinergic pharyngeal motoneurons, and the ASG, ASK and BAG neurons.

Its subcellular location is the secreted. Its function is as follows. Probable FMRFamide-like neuropeptides. Binds to neuronal receptors such as dmsr-1 to promote sleep in response to cellular stress also known as stress-induced sleep (SIS). Plays a role in behaviors associated with SIS, acting in concert with the FMRFamide related peptide, flp-24 and neuropeptide-like protein nlp-8. In terms of biological role, AADGAPLIRF-amide: Inhibits muscle tension in somatic muscle. Acts as a ligand for the npr-22 receptor in vitro. Acts as a ligand for isoform a of the dmsr-1 G-protein coupled receptor in vitro. APEASPFIRF-amide: Inhibits muscle tension in somatic muscle. Potent inhibitor of the activity of the dissected pharyngeal myogenic muscle system. Acts as a ligand for isoform a of the dmsr-1 G-protein coupled receptor in vitro. Functionally, acts as a ligand for the npr-22 receptor in vitro. Acts as a ligand for isoform a of the dmsr-1 G-protein coupled receptor in vitro. Its function is as follows. Acts as a ligand for isoform a of the dmsr-1 G-protein coupled receptor in vitro. In Caenorhabditis elegans, this protein is FMRFamide-like neuropeptides 13.